Here is a 316-residue protein sequence, read N- to C-terminus: MDVLLANPRGFCAGVDRAIEIVKRAIETLGAPIYVRHEVVHNRFVVDDLKQRGAIFVEELDEVPDNNTVIFSAHGVSQAVRQEAERRGLKVFDATCPLVTKVHFEVARHCRAGRDVVLIGHAGHPEVEGTMGQWNREAGTGQIYLVEDVEQVATLQIKQPENFAYTTQTTLSVDDTRGIIDALRERFPAMQGPKNDDICYATQNRQDAVRDLAKRCDLVLVVGSPNSSNSNRLSELARREGVESYLIDGAHEIDPAWVVGKQHIGVTAGASAPQVLVDGVLARLAELGANGVGELDGEPESMVFALPKELRLRLVD.

C12 is a [4Fe-4S] cluster binding site. H41 and H74 together coordinate (2E)-4-hydroxy-3-methylbut-2-enyl diphosphate. Residues H41 and H74 each coordinate dimethylallyl diphosphate. Positions 41 and 74 each coordinate isopentenyl diphosphate. Residue C96 participates in [4Fe-4S] cluster binding. H124 contacts (2E)-4-hydroxy-3-methylbut-2-enyl diphosphate. Position 124 (H124) interacts with dimethylallyl diphosphate. H124 contacts isopentenyl diphosphate. E126 acts as the Proton donor in catalysis. T169 provides a ligand contact to (2E)-4-hydroxy-3-methylbut-2-enyl diphosphate. C199 is a binding site for [4Fe-4S] cluster. 4 residues coordinate (2E)-4-hydroxy-3-methylbut-2-enyl diphosphate: S227, S228, N229, and S271. Residues S227, S228, N229, and S271 each coordinate dimethylallyl diphosphate. Positions 227, 228, 229, and 271 each coordinate isopentenyl diphosphate.

This sequence belongs to the IspH family. The cofactor is [4Fe-4S] cluster.

It catalyses the reaction isopentenyl diphosphate + 2 oxidized [2Fe-2S]-[ferredoxin] + H2O = (2E)-4-hydroxy-3-methylbut-2-enyl diphosphate + 2 reduced [2Fe-2S]-[ferredoxin] + 2 H(+). The enzyme catalyses dimethylallyl diphosphate + 2 oxidized [2Fe-2S]-[ferredoxin] + H2O = (2E)-4-hydroxy-3-methylbut-2-enyl diphosphate + 2 reduced [2Fe-2S]-[ferredoxin] + 2 H(+). Its pathway is isoprenoid biosynthesis; dimethylallyl diphosphate biosynthesis; dimethylallyl diphosphate from (2E)-4-hydroxy-3-methylbutenyl diphosphate: step 1/1. It functions in the pathway isoprenoid biosynthesis; isopentenyl diphosphate biosynthesis via DXP pathway; isopentenyl diphosphate from 1-deoxy-D-xylulose 5-phosphate: step 6/6. Catalyzes the conversion of 1-hydroxy-2-methyl-2-(E)-butenyl 4-diphosphate (HMBPP) into a mixture of isopentenyl diphosphate (IPP) and dimethylallyl diphosphate (DMAPP). Acts in the terminal step of the DOXP/MEP pathway for isoprenoid precursor biosynthesis. The sequence is that of 4-hydroxy-3-methylbut-2-enyl diphosphate reductase from Stenotrophomonas maltophilia (strain R551-3).